We begin with the raw amino-acid sequence, 351 residues long: O-methyltransferase apf6 (351 aa).

S-adenosyl-L-methionine-binding positions include 231 to 232 (GG), 279 to 280 (NF), and Arg-295. The Proton acceptor role is filled by His-299.

It belongs to the class I-like SAM-binding methyltransferase superfamily. Cation-independent O-methyltransferase family.

It functions in the pathway secondary metabolite biosynthesis. Its function is as follows. O-methyltransferase; part of the gene cluster that mediates the biosynthesis of the cyclic tetrapeptide apicidin F (APF). The non-ribosomal peptide synthetase apf1 incorporates four different amino acids to produce apicidin F: L-phenylalanine, D-pipecolic acid (D-pip), N-methoxy-L-tryptophan and L-2-aminooctanedioic acid. L-Phenylalanine is the only proteinogenic amino acid directly used by apf1. The 3 other apf1 substrates are non-proteinogenic and have to be modified by other enzymes of the cluster. Lysine is converted to delta-1-pyrroline-5-carboxylate (P5C) which is reduced to L-pipecolic acid (L-pip) by apf3. L-pip is epimerized to D-pip, probably by apf1 activity, prior to incorporation. L-Tryptophan is N-oxidyzed by one of the cytochrome P450 monooxygenases (apf7 or apf8), and further methylated at the hydroxy group by the O-methyltransferase apf6 to yield N-methoxy-L-tryptophan. The synthesis of the fourth apf1 substrate is more complex. The fatty acid synthase apf5 is involved in the synthesis of the octanoic acid backbone of L-2-aminooctanedioic acid by fixing one acetyl-CoA unit and three malonyl-CoA units. Then one of the cytochrome P450 monooxygenases (apf7 or apf8) may oxidize this backbone to 2-oxooctanoic acid. The aminotransferase apf4 is predicted to catalyze the exchange of the keto group with an amino group. The next step would be the oxidation of 2-aminooctanoic acid by one of the cytochrome P450 monooxygenases (apf7 or apf8). The last step is the oxidation of 2-amino-8-hydroxyoctanoic acid to 2-aminooctanedioic acid is catalyzed by the FAD-dependent monooxygenase apf9. The sequence is that of O-methyltransferase apf6 from Gibberella fujikuroi (strain CBS 195.34 / IMI 58289 / NRRL A-6831) (Bakanae and foot rot disease fungus).